Consider the following 131-residue polypeptide: Small ribosomal subunit protein uS8 (131 aa).

Belongs to the universal ribosomal protein uS8 family. In terms of assembly, part of the 30S ribosomal subunit. Contacts proteins S5 and S12.

Functionally, one of the primary rRNA binding proteins, it binds directly to 16S rRNA central domain where it helps coordinate assembly of the platform of the 30S subunit. The protein is Small ribosomal subunit protein uS8 of Pelodictyon phaeoclathratiforme (strain DSM 5477 / BU-1).